Reading from the N-terminus, the 414-residue chain is Multifunctional CCA protein (414 aa).

Residues G8 and R11 each coordinate ATP. Residues G8 and R11 each contribute to the CTP site. Positions 21 and 23 each coordinate Mg(2+). ATP is bound by residues R91, R137, and R140. CTP contacts are provided by R91, R137, and R140. Positions 228–329 (TGIHTLMTLA…LKLFDAIDVW (102 aa)) constitute an HD domain.

Belongs to the tRNA nucleotidyltransferase/poly(A) polymerase family. Bacterial CCA-adding enzyme type 1 subfamily. As to quaternary structure, monomer. Can also form homodimers and oligomers. The cofactor is Mg(2+). Ni(2+) is required as a cofactor.

The catalysed reaction is a tRNA precursor + 2 CTP + ATP = a tRNA with a 3' CCA end + 3 diphosphate. It catalyses the reaction a tRNA with a 3' CCA end + 2 CTP + ATP = a tRNA with a 3' CCACCA end + 3 diphosphate. Functionally, catalyzes the addition and repair of the essential 3'-terminal CCA sequence in tRNAs without using a nucleic acid template. Adds these three nucleotides in the order of C, C, and A to the tRNA nucleotide-73, using CTP and ATP as substrates and producing inorganic pyrophosphate. tRNA 3'-terminal CCA addition is required both for tRNA processing and repair. Also involved in tRNA surveillance by mediating tandem CCA addition to generate a CCACCA at the 3' terminus of unstable tRNAs. While stable tRNAs receive only 3'-terminal CCA, unstable tRNAs are marked with CCACCA and rapidly degraded. This Yersinia enterocolitica serotype O:8 / biotype 1B (strain NCTC 13174 / 8081) protein is Multifunctional CCA protein.